A 211-amino-acid chain; its full sequence is MTQVIQLKRYEFPQLPYKVDALEPYISKDIIDVHYNGHHKGYVNGANSLLDRLEKLIKGDLPQGQYDLQGILRGLTFNINGHKLHAIYWNNMAPAGKGGGKPGGALADLINKQYGSFDRFKQVFSESANSLPGSGWTVLYYDNESGNLQIMTVENHFMNHIAELPVILIVDEFEHAYYLQYKNKRGDYLNAWWNVVNWDDAEKRLQKYLNK.

His-34, His-85, Asp-171, and His-175 together coordinate Fe cation.

This sequence belongs to the iron/manganese superoxide dismutase family. In terms of assembly, homotetramer at high temperature; homodimer at room temperature. It depends on Fe cation as a cofactor.

The protein resides in the cytoplasm. It catalyses the reaction 2 superoxide + 2 H(+) = H2O2 + O2. Functionally, destroys superoxide anion radicals which are normally produced within the cells and which are toxic to biological systems. This is Superoxide dismutase [Fe] (sod) from Sulfolobus acidocaldarius (strain ATCC 33909 / DSM 639 / JCM 8929 / NBRC 15157 / NCIMB 11770).